Reading from the N-terminus, the 495-residue chain is Phosphomethylpyrimidine synthase (495 aa).

Substrate-binding positions include Asn125, Met154, Tyr183, His219, 239–241, 280–283, and Glu319; these read SRG and DGLR. His323 is a Zn(2+) binding site. Residue Tyr346 participates in substrate binding. Position 387 (His387) interacts with Zn(2+). [4Fe-4S] cluster-binding residues include Cys467, Cys470, and Cys475.

It belongs to the ThiC family. [4Fe-4S] cluster is required as a cofactor.

The catalysed reaction is 5-amino-1-(5-phospho-beta-D-ribosyl)imidazole + S-adenosyl-L-methionine = 4-amino-2-methyl-5-(phosphooxymethyl)pyrimidine + CO + 5'-deoxyadenosine + formate + L-methionine + 3 H(+). The protein operates within cofactor biosynthesis; thiamine diphosphate biosynthesis. In terms of biological role, catalyzes the synthesis of the hydroxymethylpyrimidine phosphate (HMP-P) moiety of thiamine from aminoimidazole ribotide (AIR) in a radical S-adenosyl-L-methionine (SAM)-dependent reaction. The sequence is that of Phosphomethylpyrimidine synthase from Leptospira interrogans serogroup Icterohaemorrhagiae serovar Lai (strain 56601).